A 190-amino-acid polypeptide reads, in one-letter code: Translation machinery-associated protein 22 (190 aa).

A disordered region spans residues 63–83 (LNVSGTKDSNAEEQPAKLTKE). In terms of domain architecture, SUI1 spans 99–170 (VLIKTIERTK…DIFDFILEKF (72 aa)).

It belongs to the DENR family. Interacts with the 40S ribosomal subunit.

It localises to the cytoplasm. In Schizosaccharomyces pombe (strain 972 / ATCC 24843) (Fission yeast), this protein is Translation machinery-associated protein 22 (tma22).